An 87-amino-acid polypeptide reads, in one-letter code: U3-theraphotoxin-Hhn1a 18 (87 aa).

An N-terminal signal peptide occupies residues 1–24 (MVNTKASMFLTFAGLVLLFVVCYA). A propeptide spanning residues 25-52 (SESEEKEFPKEMLSSIFAVDNDFKQEER) is cleaved from the precursor. Intrachain disulfides connect cysteine 54–cysteine 67, cysteine 61–cysteine 72, and cysteine 66–cysteine 79.

This sequence belongs to the neurotoxin 10 (Hwtx-1) family. 51 (Hntx-8) subfamily. Hntx-8 sub-subfamily. In terms of tissue distribution, expressed by the venom gland.

It is found in the secreted. Its function is as follows. Ion channel inhibitor. The chain is U3-theraphotoxin-Hhn1a 18 from Cyriopagopus hainanus (Chinese bird spider).